The primary structure comprises 89 residues: UPF0335 protein RPC_3979 (89 aa).

Belongs to the UPF0335 family.

This Rhodopseudomonas palustris (strain BisB18) protein is UPF0335 protein RPC_3979.